The primary structure comprises 138 residues: Large ribosomal subunit protein uL16 (138 aa).

Basic residues predominate over residues 1-17; sequence MLIPRRVKHRKQHHPTR. A disordered region spans residues 1–24; it reads MLIPRRVKHRKQHHPTRRGAASGG.

The protein belongs to the universal ribosomal protein uL16 family. Part of the 50S ribosomal subunit.

In terms of biological role, binds 23S rRNA and is also seen to make contacts with the A and possibly P site tRNAs. The sequence is that of Large ribosomal subunit protein uL16 from Kineococcus radiotolerans (strain ATCC BAA-149 / DSM 14245 / SRS30216).